A 164-amino-acid polypeptide reads, in one-letter code: UPF0304 protein ESA_00925 (164 aa).

The protein belongs to the UPF0304 family.

The polypeptide is UPF0304 protein ESA_00925 (Cronobacter sakazakii (strain ATCC BAA-894) (Enterobacter sakazakii)).